Consider the following 767-residue polypeptide: MTISPPESGEKNKKVLEDPVKADPRPIDFAKLDKPGFWSTKLSKGPKTTTWIWNLHADAHDFDVHTGDAEEATRKIFSAHFGHLAIIFIWMSAAFFHGARFSNYTGWLADPTNVKPGAQQVWAVVGQEMLNGNLGADYNGIQISSGIFHMWRAWGITNESELMALAIGAVIMAALMLHGGIYHYHKAAPKLEWFQNIESMLNHHIAGLVGLGSLAWAGHCIHIGAPTAALLDAIDAGSPLVINGQKIATIADMPMPHQLCDPQIIGQIFPGLASGVGNFFSLNWFAFSDFLTFKGGLNPVTGSLWMTDIAHHHLAFGVIAIIGGHLYRTNYGIGSSMKEILEAHQGDPILFPAPKGHQGLFEFMAESRHAQLSVNLACLGSLSILISHHMYAMPPYPYIATDYMTVLGLFTHHMWIGALFIVGAGAHAGIAMVRDYDPAKHIDNVLDRILKARDALISHLNWVCMWLGFHSFGLYIHNDTMRALGRPQDMFSDNAIQLQPIFAQWVQSIQASAVGTSILAGTPEGLPQKALSEVFNGSLVEVGGKVAISPIQLGTADLMIHHIHAFQIHVTVLILLKGVLYARSSRLIPDKASLGFRFPCDGPGRGGTCQVSSWDHVFLALFWMYNCISIVIFHFSWKMQSDVWGLTGGNFSQSAITINGWLRDFLWAQSSQVLTSYGEAISMYGLMFLGAHFIWAFSLMFLFSGRGYWQELFESIVWAHNKLKVAPTIQPRALSITQGRAVGVAHFLLGGIATTWAFFHARLFGLG.

Residues M1 to A22 are disordered. The segment covering S8 to A22 has biased composition (basic and acidic residues). The next 8 helical transmembrane spans lie at I76–A99, L162–H185, L201–A225, I309–Y327, R368–Y391, L407–V433, A455–H477, and L558–L576. [4Fe-4S] cluster is bound by residues C600 and C609. 2 consecutive transmembrane segments (helical) span residues H616–W637 and I681–F703. H692 is a divinylchlorophyll a' binding site. 2 residues coordinate divinyl chlorophyll a: M700 and Y708. W709 contributes to the phylloquinone binding site. The helical transmembrane segment at A741–A761 threads the bilayer.

It belongs to the PsaA/PsaB family. As to quaternary structure, the PsaA/B heterodimer binds the P700 divinyl chlorophyll special pair and subsequent electron acceptors. PSI consists of a core antenna complex that captures photons, and an electron transfer chain that converts photonic excitation into a charge separation. The cyanobacterial PSI reaction center is composed of one copy each of PsaA,B,C,D,E,F,I,J,K,L,M and X, and forms trimeric complexes. PSI electron transfer chain: 5 divinyl chlorophyll a, 1 divinyl chlorophyll a', 2 phylloquinones and 3 4Fe-4S clusters. PSI core antenna: 90 divinyl chlorophyll a, 22 carotenoids, 3 phospholipids and 1 galactolipid. P700 is a divinyl chlorophyll a/divinyl chlorophyll a' dimer, A0 is one or more divinyl chlorophyll a, A1 is one or both phylloquinones and FX is a shared 4Fe-4S iron-sulfur center. is required as a cofactor.

It is found in the cellular thylakoid membrane. The catalysed reaction is reduced [plastocyanin] + hnu + oxidized [2Fe-2S]-[ferredoxin] = oxidized [plastocyanin] + reduced [2Fe-2S]-[ferredoxin]. Functionally, psaA and PsaB bind P700, the primary electron donor of photosystem I (PSI), as well as the electron acceptors A0, A1 and FX. PSI is a plastocyanin/cytochrome c6-ferredoxin oxidoreductase, converting photonic excitation into a charge separation, which transfers an electron from the donor P700 chlorophyll pair to the spectroscopically characterized acceptors A0, A1, FX, FA and FB in turn. Oxidized P700 is reduced on the lumenal side of the thylakoid membrane by plastocyanin or cytochrome c6. The polypeptide is Photosystem I P700 chlorophyll a apoprotein A1 (Prochlorococcus marinus (strain MIT 9312)).